Reading from the N-terminus, the 631-residue chain is Protein FRIABLE 1 (631 aa).

Residues 1 to 13 (MSVGVPVNPSSSS) show a composition bias toward low complexity. A disordered region spans residues 1-36 (MSVGVPVNPSSSSQLPAAPTTTTRRRVADSQEDHSH). Residues 1 to 120 (MSVGVPVNPS…NMRSTTNLGR (120 aa)) are Cytoplasmic-facing. A compositionally biased stretch (basic and acidic residues) spans 26–36 (RVADSQEDHSH). The helical; Signal-anchor for type II membrane protein transmembrane segment at 121–141 (FILTLLSILVVTFFLIVALSG) threads the bilayer. At 142-631 (GVGRRRKHVE…RPSLRAQSLR (490 aa)) the chain is on the lumenal side. N-linked (GlcNAc...) asparagine glycans are attached at residues N246, N329, and N364. 384-386 (HLR) contributes to the substrate binding site. N-linked (GlcNAc...) asparagine glycans are attached at residues N398 and N425.

The protein belongs to the glycosyltransferase GT106 family. In terms of tissue distribution, ubiquitous. Strong expression in young seedlings, particularly at the junction between hypocotyl and root, in emerging cotyledons, and in parts of the roots. Also detected in the inflorescence (sepals, petals, mature pollen and siliques) and rosette leaves.

The protein localises to the golgi apparatus membrane. The protein operates within glycan metabolism. Glycosyltransferase required for normal cell adhesion and cell wall integrity. In Arabidopsis thaliana (Mouse-ear cress), this protein is Protein FRIABLE 1.